The chain runs to 152 residues: Ubiquitin-conjugating enzyme E2 2 (152 aa).

The UBC core domain maps to Pro4–Thr150. The Glycyl thioester intermediate role is filled by Cys88.

The protein belongs to the ubiquitin-conjugating enzyme family.

The enzyme catalyses S-ubiquitinyl-[E1 ubiquitin-activating enzyme]-L-cysteine + [E2 ubiquitin-conjugating enzyme]-L-cysteine = [E1 ubiquitin-activating enzyme]-L-cysteine + S-ubiquitinyl-[E2 ubiquitin-conjugating enzyme]-L-cysteine.. The protein operates within protein modification; protein ubiquitination. In terms of biological role, catalyzes the covalent attachment of ubiquitin to other proteins. The protein is Ubiquitin-conjugating enzyme E2 2 (UBC2) of Triticum aestivum (Wheat).